Consider the following 87-residue polypeptide: Small ribosomal subunit protein uS15c (87 aa).

Belongs to the universal ribosomal protein uS15 family. In terms of assembly, part of the 30S ribosomal subunit.

It localises to the plastid. Its subcellular location is the chloroplast. The polypeptide is Small ribosomal subunit protein uS15c (rps15) (Oenothera glazioviana (Large-flowered evening primrose)).